The sequence spans 269 residues: MPELPEVEVSRMGITPHLLNQTIQSLIFRTPKLRWVIPSELKKLQGQVIRHIGRRAKYLIIETDVGSAIVHLGMSGSLRVLDADFPAGKHDHVDLKLSNGKVLRYNDPRRFGAWLYAAPGEDHDVLGNIGPEPLTDAFDGQYMFEKAQGKRVAVKQFIMDNKIVVGVGNIYASESLFRSRILPTRATMSLSAEEWQRLVSHIKQTLQTAIEQGGTTLKDFSQADGKPGYFAQELQVYGKAGESCPECGEAIQELKIGQRNTFYCSYCQC.

Pro2 (schiff-base intermediate with DNA) is an active-site residue. Glu3 serves as the catalytic Proton donor. The active-site Proton donor; for beta-elimination activity is the Lys57. DNA-binding residues include His90, Arg109, and Lys150. The segment at 235–269 (QVYGKAGESCPECGEAIQELKIGQRNTFYCSYCQC) adopts an FPG-type zinc-finger fold. Arg259 functions as the Proton donor; for delta-elimination activity in the catalytic mechanism.

Belongs to the FPG family. As to quaternary structure, monomer. Requires Zn(2+) as cofactor.

The catalysed reaction is Hydrolysis of DNA containing ring-opened 7-methylguanine residues, releasing 2,6-diamino-4-hydroxy-5-(N-methyl)formamidopyrimidine.. It catalyses the reaction 2'-deoxyribonucleotide-(2'-deoxyribose 5'-phosphate)-2'-deoxyribonucleotide-DNA = a 3'-end 2'-deoxyribonucleotide-(2,3-dehydro-2,3-deoxyribose 5'-phosphate)-DNA + a 5'-end 5'-phospho-2'-deoxyribonucleoside-DNA + H(+). In terms of biological role, involved in base excision repair of DNA damaged by oxidation or by mutagenic agents. Acts as a DNA glycosylase that recognizes and removes damaged bases. Has a preference for oxidized purines, such as 7,8-dihydro-8-oxoguanine (8-oxoG). Has AP (apurinic/apyrimidinic) lyase activity and introduces nicks in the DNA strand. Cleaves the DNA backbone by beta-delta elimination to generate a single-strand break at the site of the removed base with both 3'- and 5'-phosphates. The sequence is that of Formamidopyrimidine-DNA glycosylase from Vibrio vulnificus (strain YJ016).